The chain runs to 109 residues: MSQYYELYRRSSIGISLTDALDDLISQGKISPQLAMKVLFNFDKSMTEALAEKVRSRLTFKGHLDTYRFCDEVWTFIIKNPSFRFDNETVTSNKIRIVACATRDSSANR.

The protein belongs to the TFIIA subunit 2 family. TFIIA is a heterodimer composed of the large toa1 and the small toa2 subunits.

It is found in the nucleus. The protein localises to the cytoplasm. Its function is as follows. TFIIA is a component of the transcription machinery of RNA polymerase II and plays an important role in transcriptional activation. TFIIA in a complex with tbp mediates transcriptional activity. The chain is Transcription initiation factor IIA subunit 2 (toa2) from Schizosaccharomyces pombe (strain 972 / ATCC 24843) (Fission yeast).